Reading from the N-terminus, the 160-residue chain is Cytochrome b6-f complex subunit 4 (160 aa).

3 helical membrane-spanning segments follow: residues 36–56, 95–115, and 131–151; these read LLYI…GLAV, LLGV…PFLE, and TVFL…ALPI.

The protein belongs to the cytochrome b family. PetD subfamily. In terms of assembly, the 4 large subunits of the cytochrome b6-f complex are cytochrome b6, subunit IV (17 kDa polypeptide, petD), cytochrome f and the Rieske protein, while the 4 small subunits are petG, petL, petM and petN. The complex functions as a dimer.

The protein localises to the plastid. Its subcellular location is the chloroplast thylakoid membrane. Its function is as follows. Component of the cytochrome b6-f complex, which mediates electron transfer between photosystem II (PSII) and photosystem I (PSI), cyclic electron flow around PSI, and state transitions. This is Cytochrome b6-f complex subunit 4 from Spirogyra maxima (Green alga).